The following is a 1007-amino-acid chain: Bifunctional glutamine synthetase adenylyltransferase/adenylyl-removing enzyme (1007 aa).

Positions 1–496 (MTREQLSLTV…LHERLFYRPL (496 aa)) are adenylyl removase. The segment at 505–1007 (NEDARLSGEA…GPPQRPATTA (503 aa)) is adenylyl transferase.

Belongs to the GlnE family. It depends on Mg(2+) as a cofactor.

The catalysed reaction is [glutamine synthetase]-O(4)-(5'-adenylyl)-L-tyrosine + phosphate = [glutamine synthetase]-L-tyrosine + ADP. It carries out the reaction [glutamine synthetase]-L-tyrosine + ATP = [glutamine synthetase]-O(4)-(5'-adenylyl)-L-tyrosine + diphosphate. Its function is as follows. Involved in the regulation of glutamine synthetase GlnA, a key enzyme in the process to assimilate ammonia. When cellular nitrogen levels are high, the C-terminal adenylyl transferase (AT) inactivates GlnA by covalent transfer of an adenylyl group from ATP to specific tyrosine residue of GlnA, thus reducing its activity. Conversely, when nitrogen levels are low, the N-terminal adenylyl removase (AR) activates GlnA by removing the adenylyl group by phosphorolysis, increasing its activity. The regulatory region of GlnE binds the signal transduction protein PII (GlnB) which indicates the nitrogen status of the cell. This is Bifunctional glutamine synthetase adenylyltransferase/adenylyl-removing enzyme from Leifsonia xyli subsp. xyli (strain CTCB07).